We begin with the raw amino-acid sequence, 316 residues long: MLPRLGGTALSLLPLLLLLLGTGGRGARAEVLFRCPPCTPESLAACRPPPAAPPSAGAGPAGDSRAPCELVREPGCGCCSVCARLEGERCGVYTPRCAQGLRCYPHPGSELPLQALVLGEGTCEKRRDAEYGASPEQVADNGDDAEGGLVENHVDGNVNLLGGTGGAGRKPLKSGMKELAVFREKVTEQHRQMGKGGKHHLGLEEPKKLRPPPARTPCQQELDQVLERISTMRLPDERGPLEHLYSLHIPNCDKHGLYNLKQCKMSLNGQRGECWCVNPNTGKLIQGAPTIRGDPECHLFYNEQQGARGAHTQRMQ.

A signal peptide spans 1-29 (MLPRLGGTALSLLPLLLLLLGTGGRGARA). Residues 31–126 (VLFRCPPCTP…VLGEGTCEKR (96 aa)) enclose the IGFBP N-terminal domain. 6 disulfides stabilise this stretch: C35–C76, C38–C78, C46–C79, C68–C82, C90–C103, and C97–C123. Positions 189–217 (QHRQMGKGGKHHLGLEEPKKLRPPPARTP) are disordered. Residues 215–297 (RTPCQQELDQ…APTIRGDPEC (83 aa)) enclose the Thyroglobulin type-1 domain. Intrachain disulfides connect C218–C252, C263–C274, and C276–C297. The Cell attachment site signature appears at 292–294 (RGD).

As to quaternary structure, interacts with IGF1. Interacts with IGF2. Interacts (via RGD motif) with integrin alpha5/ITGA5; this interaction induces cell migration, adhesion or apoptosis according to the context. Interacts with PTPRB; this interaction leads to PTPRB dimerization and inactivation. Cleaved by MMP9 leading to release of free IGF2 from IGFBP2-IGF2 complex, which contributes to enhance the motility and the growth of astrocytes. In terms of processing, O-glycosylated.

The protein resides in the secreted. Its function is as follows. May have both growth-inhibiting and growth-promoting effects, depending on tissue type; increases IGF-induced DNA synthesis in the uterine epithelium. IGF-binding proteins prolong the half-life of the IGFs and have been shown to either inhibit or stimulate the growth promoting effects of the IGFs on cell culture. They alter the interaction of IGFs with their cell surface receptors. Multifunctional protein that plays a critical role in regulating the availability of IGFs such as IGF1 and IGF2 to their receptors and thereby regulates IGF-mediated cellular processes including proliferation, differentiation, and apoptosis in a cell-type specific manner. Functions coordinately with receptor protein tyrosine phosphatase beta/PTPRB and the IGF1 receptor to regulate IGF1-mediated signaling by stimulating the phosphorylation of PTEN leading to its inactivation and AKT1 activation. Plays a positive role in cell migration via interaction with integrin alpha5/ITGA5 through an RGD motif. Additionally, interaction with ITGA5/ITGB1 enhances the adhesion of endothelial progenitor cells to endothelial cells. Upon mitochondrial damage, facilitates apoptosis with ITGA5 of podocytes, and then activates the phosphorylation of focal adhesion kinase (FAK)-mediated mitochondrial injury. This chain is Insulin-like growth factor-binding protein 2 (IGFBP2), found in Sus scrofa (Pig).